A 204-amino-acid polypeptide reads, in one-letter code: Large ribosomal subunit protein uL4 (204 aa).

Residues 48–75 are disordered; sequence HTKGRSDVSGGGKKPWRQKGRGGARAGS.

The protein belongs to the universal ribosomal protein uL4 family. Part of the 50S ribosomal subunit.

In terms of biological role, one of the primary rRNA binding proteins, this protein initially binds near the 5'-end of the 23S rRNA. It is important during the early stages of 50S assembly. It makes multiple contacts with different domains of the 23S rRNA in the assembled 50S subunit and ribosome. Functionally, forms part of the polypeptide exit tunnel. This Campylobacter fetus subsp. fetus (strain 82-40) protein is Large ribosomal subunit protein uL4.